A 258-amino-acid polypeptide reads, in one-letter code: Cholera enterotoxin subunit A (258 aa).

A signal peptide spans M1–A18. NAD(+) is bound by residues R25–S28 and M41–R43. E130 is an active-site residue. Residues C205 and C217 are joined by a disulfide bond.

The protein belongs to the enterotoxin A family. In terms of assembly, the holotoxin (choleragen) consists of a pentameric ring of B subunits whose central pore is occupied by the A subunit. The A subunit contains two chains, A1 and A2, linked by a disulfide bridge. Interaction with the host protein ARF6 causes a conformation change so that the enterotoxin subunit A1 can bind NAD and catalyze the ADP-ribosylation of the host Gs alpha.

In terms of biological role, the A1 chain catalyzes the ADP-ribosylation of Gs alpha, a GTP-binding regulatory protein, to activate the adenylate cyclase. This leads to an overproduction of cAMP and eventually to a hypersecretion of chloride and bicarbonate followed by water, resulting in the characteristic cholera stool. The A2 chain tethers A1 to the pentameric ring. The chain is Cholera enterotoxin subunit A (ctxA) from Vibrio cholerae serotype O1 (strain ATCC 39315 / El Tor Inaba N16961).